The chain runs to 469 residues: 3-isopropylmalate dehydratase large subunit (469 aa).

Residues Cys347, Cys408, and Cys411 each coordinate [4Fe-4S] cluster.

It belongs to the aconitase/IPM isomerase family. LeuC type 1 subfamily. As to quaternary structure, heterodimer of LeuC and LeuD. [4Fe-4S] cluster serves as cofactor.

The enzyme catalyses (2R,3S)-3-isopropylmalate = (2S)-2-isopropylmalate. It participates in amino-acid biosynthesis; L-leucine biosynthesis; L-leucine from 3-methyl-2-oxobutanoate: step 2/4. Functionally, catalyzes the isomerization between 2-isopropylmalate and 3-isopropylmalate, via the formation of 2-isopropylmaleate. This is 3-isopropylmalate dehydratase large subunit from Actinobacillus pleuropneumoniae serotype 3 (strain JL03).